Reading from the N-terminus, the 443-residue chain is Trigger factor (443 aa).

In terms of domain architecture, PPIase FKBP-type spans 163-249 (KDAAIIDYQA…LKSLKEEILP (87 aa)).

This sequence belongs to the FKBP-type PPIase family. Tig subfamily.

Its subcellular location is the cytoplasm. The catalysed reaction is [protein]-peptidylproline (omega=180) = [protein]-peptidylproline (omega=0). Involved in protein export. Acts as a chaperone by maintaining the newly synthesized protein in an open conformation. Functions as a peptidyl-prolyl cis-trans isomerase. The polypeptide is Trigger factor (Desulfosudis oleivorans (strain DSM 6200 / JCM 39069 / Hxd3) (Desulfococcus oleovorans)).